Reading from the N-terminus, the 287-residue chain is Small ribosomal subunit protein uS3 (287 aa).

The region spanning Ile-38–Lys-106 is the KH type-2 domain. The segment at Ala-216–Ser-287 is disordered. Residues Ser-238–Ser-287 are compositionally biased toward low complexity.

The protein belongs to the universal ribosomal protein uS3 family. As to quaternary structure, part of the 30S ribosomal subunit. Forms a tight complex with proteins S10 and S14.

Its function is as follows. Binds the lower part of the 30S subunit head. Binds mRNA in the 70S ribosome, positioning it for translation. This Mycobacterium sp. (strain JLS) protein is Small ribosomal subunit protein uS3.